The following is a 363-amino-acid chain: Uptake hydrogenase small subunit (363 aa).

A signal peptide (tat-type signal) is located at residues Met1–Ala43. [4Fe-4S] cluster-binding residues include Cys60, Cys63, Cys158, Cys192, His230, Cys233, Cys258, and Cys264. The [3Fe-4S] cluster site is built by Cys273, Cys292, and Cys295.

This sequence belongs to the [NiFe]/[NiFeSe] hydrogenase small subunit family. As to quaternary structure, heterodimer of a large and a small subunit. [4Fe-4S] cluster serves as cofactor. [3Fe-4S] cluster is required as a cofactor. Predicted to be exported by the Tat system. The position of the signal peptide cleavage has not been experimentally proven.

It localises to the cell membrane. The catalysed reaction is H2 + A = AH2. In terms of biological role, this enzyme recycles the H(2) produced by nitrogenase to increase the production of ATP and to protect nitrogenase against inhibition or damage by O(2) under carbon- or phosphate-limited conditions. The polypeptide is Uptake hydrogenase small subunit (hupS) (Alcaligenes hydrogenophilus).